The chain runs to 122 residues: Large ribosomal subunit protein uL14 (122 aa).

It belongs to the universal ribosomal protein uL14 family. In terms of assembly, part of the 50S ribosomal subunit. Forms a cluster with proteins L3 and L19. In the 70S ribosome, L14 and L19 interact and together make contacts with the 16S rRNA in bridges B5 and B8.

Functionally, binds to 23S rRNA. Forms part of two intersubunit bridges in the 70S ribosome. The chain is Large ribosomal subunit protein uL14 from Mycobacterium tuberculosis (strain ATCC 25177 / H37Ra).